A 411-amino-acid polypeptide reads, in one-letter code: Exodeoxyribonuclease 7 large subunit (411 aa).

It belongs to the XseA family. In terms of assembly, heterooligomer composed of large and small subunits.

Its subcellular location is the cytoplasm. The enzyme catalyses Exonucleolytic cleavage in either 5'- to 3'- or 3'- to 5'-direction to yield nucleoside 5'-phosphates.. In terms of biological role, bidirectionally degrades single-stranded DNA into large acid-insoluble oligonucleotides, which are then degraded further into small acid-soluble oligonucleotides. The polypeptide is Exodeoxyribonuclease 7 large subunit (Mycobacterium sp. (strain KMS)).